We begin with the raw amino-acid sequence, 487 residues long: GDP-Man:Man(3)GlcNAc(2)-PP-Dol alpha-1,2-mannosyltransferase (487 aa).

The Lumenal portion of the chain corresponds to 1–16 (MAGILCLCGMMRLLTA). Residues 17 to 37 (LFIPVLIASIGLCLVLVLLFI) traverse the membrane as a helical segment. Residues 38-231 (CTRLWIQRKK…SNNPVLSRLK (194 aa)) are Cytoplasmic-facing. The helical intramembrane region spans 232–252 (LIYYYLFAVIYGWVGSCSDVI). The Cytoplasmic segment spans residues 253–394 (MVNSTWTFAH…IGLHTMWNEH (142 aa)). The helical intramembrane region spans 395 to 415 (FGIGIVECMAAGTIILAHNSG). Residues 416–487 (GPKLDIVVPY…FLASSEPLFM (72 aa)) lie on the Cytoplasmic side of the membrane.

It belongs to the glycosyltransferase group 1 family. Glycosyltransferase 4 subfamily.

It is found in the endoplasmic reticulum membrane. It catalyses the reaction an alpha-D-Man-(1-&gt;3)-[alpha-D-Man-(1-&gt;6)]-beta-D-Man-(1-&gt;4)-beta-D-GlcNAc-(1-&gt;4)-alpha-D-GlcNAc-diphospho-di-trans,poly-cis-dolichol + 2 GDP-alpha-D-mannose = an alpha-D-Man-(1-&gt;2)-alpha-D-Man-(1-&gt;2)-alpha-D-Man-(1-&gt;3)-[alpha-D-Man-(1-&gt;6)]-beta-D-Man-(1-&gt;4)-beta-D-GlcNAc-(1-&gt;4)-alpha-D-GlcNAc-diphospho-di-trans,poly-cis-dolichol + 2 GDP + 2 H(+). It functions in the pathway protein modification; protein glycosylation. Its function is as follows. GDP-Man:Man(3)GlcNAc(2)-PP-Dol alpha-1,2-mannosyltransferase that operates in the biosynthetic pathway of dolichol-linked oligosaccharides, the glycan precursors employed in protein asparagine (N)-glycosylation. The assembly of dolichol-linked oligosaccharides begins on the cytosolic side of the endoplasmic reticulum membrane and finishes in its lumen. The sequential addition of sugars to dolichol pyrophosphate produces dolichol-linked oligosaccharides containing fourteen sugars, including two GlcNAcs, nine mannoses and three glucoses. Once assembled, the oligosaccharide is transferred from the lipid to nascent proteins by oligosaccharyltransferases. Catalyzes, on the cytoplasmic face of the endoplasmic reticulum, the addition of the fourth and fifth mannose residues to the dolichol-linked oligosaccharide chain, to produce Man(5)GlcNAc(2)-PP-dolichol core oligosaccharide. Man(5)GlcNAc(2)-PP-dolichol is a substrate for ALG3, the following enzyme in the biosynthetic pathway. The chain is GDP-Man:Man(3)GlcNAc(2)-PP-Dol alpha-1,2-mannosyltransferase (alg11) from Xenopus tropicalis (Western clawed frog).